Reading from the N-terminus, the 273-residue chain is Bis(5'-nucleosyl)-tetraphosphatase, symmetrical (273 aa).

Belongs to the Ap4A hydrolase family.

The catalysed reaction is P(1),P(4)-bis(5'-adenosyl) tetraphosphate + H2O = 2 ADP + 2 H(+). In terms of biological role, hydrolyzes diadenosine 5',5'''-P1,P4-tetraphosphate to yield ADP. This Histophilus somni (strain 2336) (Haemophilus somnus) protein is Bis(5'-nucleosyl)-tetraphosphatase, symmetrical.